Reading from the N-terminus, the 349-residue chain is 4-hydroxy-3-methylbut-2-enyl diphosphate reductase (349 aa).

Cysteine 18 is a binding site for [4Fe-4S] cluster. Histidine 47 and histidine 83 together coordinate (2E)-4-hydroxy-3-methylbut-2-enyl diphosphate. Histidine 47 and histidine 83 together coordinate dimethylallyl diphosphate. Isopentenyl diphosphate contacts are provided by histidine 47 and histidine 83. Cysteine 105 is a binding site for [4Fe-4S] cluster. Histidine 133 lines the (2E)-4-hydroxy-3-methylbut-2-enyl diphosphate pocket. Histidine 133 contacts dimethylallyl diphosphate. Histidine 133 contacts isopentenyl diphosphate. The active-site Proton donor is the glutamate 135. A (2E)-4-hydroxy-3-methylbut-2-enyl diphosphate-binding site is contributed by threonine 174. [4Fe-4S] cluster is bound at residue cysteine 204. Serine 232, serine 233, asparagine 234, and serine 277 together coordinate (2E)-4-hydroxy-3-methylbut-2-enyl diphosphate. Residues serine 232, serine 233, asparagine 234, and serine 277 each coordinate dimethylallyl diphosphate. Isopentenyl diphosphate contacts are provided by serine 232, serine 233, asparagine 234, and serine 277.

The protein belongs to the IspH family. Requires [4Fe-4S] cluster as cofactor.

It catalyses the reaction isopentenyl diphosphate + 2 oxidized [2Fe-2S]-[ferredoxin] + H2O = (2E)-4-hydroxy-3-methylbut-2-enyl diphosphate + 2 reduced [2Fe-2S]-[ferredoxin] + 2 H(+). The catalysed reaction is dimethylallyl diphosphate + 2 oxidized [2Fe-2S]-[ferredoxin] + H2O = (2E)-4-hydroxy-3-methylbut-2-enyl diphosphate + 2 reduced [2Fe-2S]-[ferredoxin] + 2 H(+). It participates in isoprenoid biosynthesis; dimethylallyl diphosphate biosynthesis; dimethylallyl diphosphate from (2E)-4-hydroxy-3-methylbutenyl diphosphate: step 1/1. Its pathway is isoprenoid biosynthesis; isopentenyl diphosphate biosynthesis via DXP pathway; isopentenyl diphosphate from 1-deoxy-D-xylulose 5-phosphate: step 6/6. In terms of biological role, catalyzes the conversion of 1-hydroxy-2-methyl-2-(E)-butenyl 4-diphosphate (HMBPP) into a mixture of isopentenyl diphosphate (IPP) and dimethylallyl diphosphate (DMAPP). Acts in the terminal step of the DOXP/MEP pathway for isoprenoid precursor biosynthesis. This Bartonella bacilliformis (strain ATCC 35685 / KC583 / Herrer 020/F12,63) protein is 4-hydroxy-3-methylbut-2-enyl diphosphate reductase.